A 289-amino-acid chain; its full sequence is 4-hydroxy-3-methylbut-2-enyl diphosphate reductase (289 aa).

Cys13 serves as a coordination point for [4Fe-4S] cluster. His41 and His75 together coordinate (2E)-4-hydroxy-3-methylbut-2-enyl diphosphate. His41 and His75 together coordinate dimethylallyl diphosphate. The isopentenyl diphosphate site is built by His41 and His75. Cys97 contacts [4Fe-4S] cluster. Residue His129 coordinates (2E)-4-hydroxy-3-methylbut-2-enyl diphosphate. A dimethylallyl diphosphate-binding site is contributed by His129. His129 contacts isopentenyl diphosphate. Residue Glu131 is the Proton donor of the active site. A (2E)-4-hydroxy-3-methylbut-2-enyl diphosphate-binding site is contributed by Thr167. Position 198 (Cys198) interacts with [4Fe-4S] cluster. Residues Ser226, Ser227, Asn228, and Ser270 each coordinate (2E)-4-hydroxy-3-methylbut-2-enyl diphosphate. Residues Ser226, Ser227, Asn228, and Ser270 each coordinate dimethylallyl diphosphate. Positions 226, 227, 228, and 270 each coordinate isopentenyl diphosphate.

This sequence belongs to the IspH family. It depends on [4Fe-4S] cluster as a cofactor.

The enzyme catalyses isopentenyl diphosphate + 2 oxidized [2Fe-2S]-[ferredoxin] + H2O = (2E)-4-hydroxy-3-methylbut-2-enyl diphosphate + 2 reduced [2Fe-2S]-[ferredoxin] + 2 H(+). It catalyses the reaction dimethylallyl diphosphate + 2 oxidized [2Fe-2S]-[ferredoxin] + H2O = (2E)-4-hydroxy-3-methylbut-2-enyl diphosphate + 2 reduced [2Fe-2S]-[ferredoxin] + 2 H(+). It participates in isoprenoid biosynthesis; dimethylallyl diphosphate biosynthesis; dimethylallyl diphosphate from (2E)-4-hydroxy-3-methylbutenyl diphosphate: step 1/1. It functions in the pathway isoprenoid biosynthesis; isopentenyl diphosphate biosynthesis via DXP pathway; isopentenyl diphosphate from 1-deoxy-D-xylulose 5-phosphate: step 6/6. In terms of biological role, catalyzes the conversion of 1-hydroxy-2-methyl-2-(E)-butenyl 4-diphosphate (HMBPP) into a mixture of isopentenyl diphosphate (IPP) and dimethylallyl diphosphate (DMAPP). Acts in the terminal step of the DOXP/MEP pathway for isoprenoid precursor biosynthesis. In Bacteroides thetaiotaomicron (strain ATCC 29148 / DSM 2079 / JCM 5827 / CCUG 10774 / NCTC 10582 / VPI-5482 / E50), this protein is 4-hydroxy-3-methylbut-2-enyl diphosphate reductase.